The following is a 362-amino-acid chain: Holliday junction branch migration complex subunit RuvB (362 aa).

The disordered stretch occupies residues 1–20 (MKRTIMTNTDTFEQPNTGAN). The interval 15 to 203 (PNTGANEESL…FGFTAHLDFY (189 aa)) is large ATPase domain (RuvB-L). ATP is bound by residues Leu42, Arg43, Gly84, Lys87, Thr88, Thr89, 150–152 (EDF), Arg193, Tyr203, and Arg240. Thr88 serves as a coordination point for Mg(2+). The segment at 204-274 (PHEELEKLIE…DVKEALALYQ (71 aa)) is small ATPAse domain (RuvB-S). The head domain (RuvB-H) stretch occupies residues 277-362 (TEGLDRLDIA…ESAYDVNEMS (86 aa)). DNA is bound by residues Arg332 and Arg337.

The protein belongs to the RuvB family. Homohexamer. Forms an RuvA(8)-RuvB(12)-Holliday junction (HJ) complex. HJ DNA is sandwiched between 2 RuvA tetramers; dsDNA enters through RuvA and exits via RuvB. An RuvB hexamer assembles on each DNA strand where it exits the tetramer. Each RuvB hexamer is contacted by two RuvA subunits (via domain III) on 2 adjacent RuvB subunits; this complex drives branch migration. In the full resolvosome a probable DNA-RuvA(4)-RuvB(12)-RuvC(2) complex forms which resolves the HJ.

The protein localises to the cytoplasm. It carries out the reaction ATP + H2O = ADP + phosphate + H(+). The RuvA-RuvB-RuvC complex processes Holliday junction (HJ) DNA during genetic recombination and DNA repair, while the RuvA-RuvB complex plays an important role in the rescue of blocked DNA replication forks via replication fork reversal (RFR). RuvA specifically binds to HJ cruciform DNA, conferring on it an open structure. The RuvB hexamer acts as an ATP-dependent pump, pulling dsDNA into and through the RuvAB complex. RuvB forms 2 homohexamers on either side of HJ DNA bound by 1 or 2 RuvA tetramers; 4 subunits per hexamer contact DNA at a time. Coordinated motions by a converter formed by DNA-disengaged RuvB subunits stimulates ATP hydrolysis and nucleotide exchange. Immobilization of the converter enables RuvB to convert the ATP-contained energy into a lever motion, pulling 2 nucleotides of DNA out of the RuvA tetramer per ATP hydrolyzed, thus driving DNA branch migration. The RuvB motors rotate together with the DNA substrate, which together with the progressing nucleotide cycle form the mechanistic basis for DNA recombination by continuous HJ branch migration. Branch migration allows RuvC to scan DNA until it finds its consensus sequence, where it cleaves and resolves cruciform DNA. This Bifidobacterium adolescentis (strain ATCC 15703 / DSM 20083 / NCTC 11814 / E194a) protein is Holliday junction branch migration complex subunit RuvB.